The chain runs to 149 residues: UPF0178 protein Lmo1456 (149 aa).

It belongs to the UPF0178 family.

This is UPF0178 protein Lmo1456 from Listeria monocytogenes serovar 1/2a (strain ATCC BAA-679 / EGD-e).